Here is a 163-residue protein sequence, read N- to C-terminus: Lipoprotein signal peptidase (163 aa).

4 consecutive transmembrane segments (helical) span residues 9-29, 42-62, 67-87, and 93-113; these read AWPWLWLSVLVILLDQLSKYL, ILPFLNFTLNYNTGAAFSFLG, WQIIFFAAISFVVSIFLILWL, and SEIMMSLGLSLIIGGALGNFI. Active-site residues include Asp-123 and Asp-141. A helical transmembrane segment spans residues 137-157; sequence FNVADSAICVGVFLLIVYMLL.

The protein belongs to the peptidase A8 family.

It localises to the cell inner membrane. It catalyses the reaction Release of signal peptides from bacterial membrane prolipoproteins. Hydrolyzes -Xaa-Yaa-Zaa-|-(S,diacylglyceryl)Cys-, in which Xaa is hydrophobic (preferably Leu), and Yaa (Ala or Ser) and Zaa (Gly or Ala) have small, neutral side chains.. It participates in protein modification; lipoprotein biosynthesis (signal peptide cleavage). This protein specifically catalyzes the removal of signal peptides from prolipoproteins. The polypeptide is Lipoprotein signal peptidase (Coxiella burnetii (strain Dugway 5J108-111)).